The chain runs to 549 residues: Dihydroxy-acid dehydratase (549 aa).

Residue Asp-78 participates in Mg(2+) binding. A [2Fe-2S] cluster-binding site is contributed by Cys-119. The Mg(2+) site is built by Asp-120 and Lys-121. N6-carboxylysine is present on Lys-121. Cys-192 is a binding site for [2Fe-2S] cluster. Glu-439 serves as a coordination point for Mg(2+). Residue Ser-465 is the Proton acceptor of the active site.

It belongs to the IlvD/Edd family. In terms of assembly, homodimer. [2Fe-2S] cluster is required as a cofactor. Requires Mg(2+) as cofactor.

The catalysed reaction is (2R)-2,3-dihydroxy-3-methylbutanoate = 3-methyl-2-oxobutanoate + H2O. The enzyme catalyses (2R,3R)-2,3-dihydroxy-3-methylpentanoate = (S)-3-methyl-2-oxopentanoate + H2O. It functions in the pathway amino-acid biosynthesis; L-isoleucine biosynthesis; L-isoleucine from 2-oxobutanoate: step 3/4. It participates in amino-acid biosynthesis; L-valine biosynthesis; L-valine from pyruvate: step 3/4. Functionally, functions in the biosynthesis of branched-chain amino acids. Catalyzes the dehydration of (2R,3R)-2,3-dihydroxy-3-methylpentanoate (2,3-dihydroxy-3-methylvalerate) into 2-oxo-3-methylpentanoate (2-oxo-3-methylvalerate) and of (2R)-2,3-dihydroxy-3-methylbutanoate (2,3-dihydroxyisovalerate) into 2-oxo-3-methylbutanoate (2-oxoisovalerate), the penultimate precursor to L-isoleucine and L-valine, respectively. This is Dihydroxy-acid dehydratase from Endomicrobium trichonymphae.